The primary structure comprises 28 residues: Trypsin inhibitor 2 (28 aa).

3 cysteine pairs are disulfide-bonded: Cys-3–Cys-20, Cys-10–Cys-22, and Cys-16–Cys-27.

Belongs to the protease inhibitor I7 (squash-type serine protease inhibitor) family.

Its subcellular location is the secreted. Its function is as follows. Inhibits trypsin. This is Trypsin inhibitor 2 from Momordica charantia (Bitter gourd).